Here is a 308-residue protein sequence, read N- to C-terminus: Taste receptor type 2 member 41 (308 aa).

The Extracellular portion of the chain corresponds to 1–6 (MLSTVS). Residues 7–27 (VFFMSIFVLLCFLGILANGFI) traverse the membrane as a helical segment. At 28–60 (VLMLSREWLWRGRLLPSDMILLSLGTSRFCQQC) the chain is on the cytoplasmic side. Residues 61-81 (VGLVNSFYYSLHLVEYSRSLA) form a helical membrane-spanning segment. Topologically, residues 82-90 (RQLISLHMD) are extracellular. Residues 91–111 (FLNSATFWFGTWLSVLFCIKI) form a helical membrane-spanning segment. The Cytoplasmic segment spans residues 112–128 (ANFSHPAFLWLKWRFPA). Residues 129–149 (LVPWLLLGSILVSFIVTLMFF) form a helical membrane-spanning segment. The Extracellular portion of the chain corresponds to 150–184 (WGNHTVYQAFLRRKFSGNTTFKEWNRRLEIDYFMP). N-linked (GlcNAc...) asparagine glycans are attached at residues Asn152 and Asn167. A helical transmembrane segment spans residues 185-205 (LKLVTTSIPCSLFLVSILLLI). Over 206–239 (NSLRRHSQRMQHNAHSLQDPNTQAHSRALKSLIS) the chain is Cytoplasmic. A helical transmembrane segment spans residues 240–260 (FLVLYALSYVSMVIDATVVIS). Residues 261–264 (SDNV) lie on the Extracellular side of the membrane. Residues 265 to 285 (WYWPWQIILYLCMSVHPFILI) traverse the membrane as a helical segment. At 286-308 (TNNLKFRGTFRQLLLLARGFWVT) the chain is on the cytoplasmic side.

This sequence belongs to the G-protein coupled receptor T2R family. In terms of tissue distribution, expressed in subsets of taste receptor cells of the tongue and palate epithelium and exclusively in gustducin-positive cells. Expressed in 15% taste bud cells in circumvallate and foliate papillae but only in 2% in fungiform papillae. Expressed in the duodenum, antrum and fundus (part of the stomach).

The protein resides in the membrane. Functionally, receptor that may play a role in the perception of bitterness and is gustducin-linked. May play a role in sensing the chemical composition of the gastrointestinal content. The activity of this receptor may stimulate alpha gustducin, mediate PLC-beta-2 activation and lead to the gating of TRPM5. The polypeptide is Taste receptor type 2 member 41 (Tas2r41) (Rattus norvegicus (Rat)).